The sequence spans 311 residues: Ornithine carbamoyltransferase (311 aa).

Carbamoyl phosphate contacts are provided by residues 52-55, glutamine 79, arginine 103, and 129-132; these read STRT and HPVQ. Residues asparagine 167, aspartate 226, and 230–231 each bind L-ornithine; that span reads SM. Carbamoyl phosphate is bound by residues 266-267 and arginine 294; that span reads CL.

It belongs to the aspartate/ornithine carbamoyltransferase superfamily. OTCase family.

Its subcellular location is the cytoplasm. The enzyme catalyses carbamoyl phosphate + L-ornithine = L-citrulline + phosphate + H(+). Its pathway is amino-acid biosynthesis; L-arginine biosynthesis; L-arginine from L-ornithine and carbamoyl phosphate: step 1/3. Reversibly catalyzes the transfer of the carbamoyl group from carbamoyl phosphate (CP) to the N(epsilon) atom of ornithine (ORN) to produce L-citrulline. The polypeptide is Ornithine carbamoyltransferase (Sorangium cellulosum (strain So ce56) (Polyangium cellulosum (strain So ce56))).